A 232-amino-acid polypeptide reads, in one-letter code: Small ribosomal subunit protein uS3 (232 aa).

The KH type-2 domain maps to 39–107; the sequence is IREILHKELK…DVVINIVEIR (69 aa).

Belongs to the universal ribosomal protein uS3 family. In terms of assembly, part of the 30S ribosomal subunit. Forms a tight complex with proteins S10 and S14.

Functionally, binds the lower part of the 30S subunit head. Binds mRNA in the 70S ribosome, positioning it for translation. In Rhodopseudomonas palustris (strain BisB18), this protein is Small ribosomal subunit protein uS3.